A 207-amino-acid polypeptide reads, in one-letter code: Protein-L-isoaspartate O-methyltransferase (207 aa).

The active site involves S56.

The protein belongs to the methyltransferase superfamily. L-isoaspartyl/D-aspartyl protein methyltransferase family.

The protein resides in the cytoplasm. The enzyme catalyses [protein]-L-isoaspartate + S-adenosyl-L-methionine = [protein]-L-isoaspartate alpha-methyl ester + S-adenosyl-L-homocysteine. In terms of biological role, catalyzes the methyl esterification of L-isoaspartyl residues in peptides and proteins that result from spontaneous decomposition of normal L-aspartyl and L-asparaginyl residues. It plays a role in the repair and/or degradation of damaged proteins. This chain is Protein-L-isoaspartate O-methyltransferase, found in Pyrobaculum neutrophilum (strain DSM 2338 / JCM 9278 / NBRC 100436 / V24Sta) (Thermoproteus neutrophilus).